Consider the following 187-residue polypeptide: uncharacterized protein (187 aa).

The disordered stretch occupies residues 131–187 (VAEKKDQRKKKPKVKTQGENAPVAKSAGENSGKLEEQKDERKGIAKDIDDFFGGIDG). The span at 162–179 (GKLEEQKDERKGIAKDID) shows a compositional bias: basic and acidic residues.

This is an uncharacterized protein from Haemophilus influenzae (Bacteriophage HP1).